The sequence spans 554 residues: Protein PNS1 (554 aa).

Low complexity-rich tracts occupy residues Met1–Asn19 and Ser27–Tyr45. The disordered stretch occupies residues Met1 to Ser90. Residues Met1–Trp105 lie on the Cytoplasmic side of the membrane. A compositionally biased stretch (pro residues) spans Pro68–Ser90. A helical transmembrane segment spans residues Trp106 to Ile126. At His127 to Thr153 the chain is on the extracellular side. 2 N-linked (GlcNAc...) asparagine glycosylation sites follow: Asn132 and Asn137. Residues Ile154–Met174 form a helical membrane-spanning segment. Topologically, residues Ala175 to Gln181 are cytoplasmic. A helical membrane pass occupies residues Phe182–Leu202. At Ser203–Tyr206 the chain is on the extracellular side. The helical transmembrane segment at Trp207–Cys227 threads the bilayer. Residues Arg228–Ser255 are Cytoplasmic-facing. The helical transmembrane segment at Ala256 to Val276 threads the bilayer. At Tyr277–Ser297 the chain is on the extracellular side. Residues Gly298–Leu318 traverse the membrane as a helical segment. Residues Lys319–Ser352 lie on the Cytoplasmic side of the membrane. A helical transmembrane segment spans residues Leu353 to Ile373. The Extracellular segment spans residues Arg374 to Asp389. The chain crosses the membrane as a helical span at residues Ile390–Val410. At Glu411–Cys451 the chain is on the cytoplasmic side. Residues Leu452 to Ala472 form a helical membrane-spanning segment. At Tyr473–Gly487 the chain is on the extracellular side. The chain crosses the membrane as a helical span at residues Gly488–Phe508. Residues Thr509–Ala554 lie on the Cytoplasmic side of the membrane.

It belongs to the CTL (choline transporter-like) family.

The protein resides in the cell membrane. Functionally, probably involved in transport through the plasma membrane. The protein is Protein PNS1 (pns-1) of Neurospora crassa (strain ATCC 24698 / 74-OR23-1A / CBS 708.71 / DSM 1257 / FGSC 987).